Consider the following 65-residue polypeptide: Large ribosomal subunit protein uL29 (65 aa).

Belongs to the universal ribosomal protein uL29 family.

In Mycoplasmopsis synoviae (strain 53) (Mycoplasma synoviae), this protein is Large ribosomal subunit protein uL29.